A 527-amino-acid chain; its full sequence is MGKFIKQLSKFGKKVGGALTSNTAKKIYKTIGDTAVRFAESDIGSAAIDGLIQGSVESVLTGESYGETVKRAVLLNVLGAGDEIPDPLSPGEQGIQRKIKELEDEMKGEVVRTKHNEQIIRRFGADLDEVYKFAVSEYKEGVEEKDQFEILKKALTSYGELTKAEFGELKRLEKALQKESSERSKDESMMVKEYRQKIEALKDAIEVESTGIQEEAIQEIAGMSADILESAAEEVPLFGGGVATSIATARAIEGGYKLKKVINALSGIDLSHLRTPKIQPKTLEAILEAPTKEEIKDLSLVEGIQMKLQNLEENRNEVLHIQEEILPKLREAMIEDHKEIGDERDKRILPKTAMRFKVPTTQQPVIQIYSAPWDSDDVFMFHCISHHHLNESSFLGFDLELEYVHYEDLTRHWHALGAAQEVTGRSLKEAYSEFFQLAAQIDGAGAIHQKRLIRSKSYHPIYLGAMHYDIAYRELKNNALKIVNDSEVQKHLLRGPKHFQRRAILSALKDGVKLLGGVDLAEFMRYA.

The tract at residues 1-42 (MGKFIKQLSKFGKKVGGALTSNTAKKIYKTIGDTAVRFAESD) is involved in membrane permeabilization.

It belongs to the orbivirus VP5 family.

Its subcellular location is the virion. In terms of biological role, VP5 protein is one of the two proteins (with VP2) which constitute the virus particle outer capsid. Acts as a membrane permeabilization protein that mediates release of viral particles from endosomal compartments into the cytoplasm. Permeabilization activity is probably negatively regulated by VP2 and is triggered by endosomal degradation of VP2 and exposure to low pH. This is Outer capsid protein VP5 (Segment-6) from Antilocapra americana (Pronghorn).